Reading from the N-terminus, the 162-residue chain is Shikimate kinase (162 aa).

11–16 (GSGKSS) is an ATP binding site. Residue Ser15 participates in Mg(2+) binding. Substrate-binding residues include Asp33, Arg57, and Gly80. Arg116 lines the ATP pocket. Arg132 is a binding site for substrate.

It belongs to the shikimate kinase family. Monomer. Mg(2+) is required as a cofactor.

It localises to the cytoplasm. It carries out the reaction shikimate + ATP = 3-phosphoshikimate + ADP + H(+). It functions in the pathway metabolic intermediate biosynthesis; chorismate biosynthesis; chorismate from D-erythrose 4-phosphate and phosphoenolpyruvate: step 5/7. Its function is as follows. Catalyzes the specific phosphorylation of the 3-hydroxyl group of shikimic acid using ATP as a cosubstrate. This Helicobacter pylori (strain Shi470) protein is Shikimate kinase.